Consider the following 290-residue polypeptide: 4-hydroxybenzoate octaprenyltransferase (290 aa).

Transmembrane regions (helical) follow at residues 23 to 43 (IGTL…GKGV), 46 to 66 (LSIL…GCVV), 99 to 119 (LFVV…AMTI), 141 to 161 (LPQF…YAAV), 170 to 190 (WLLL…YAMV), 213 to 233 (LIVG…GYLT), 234 to 254 (QMSG…IHQQ), and 268 to 288 (AFMD…LSYW).

This sequence belongs to the UbiA prenyltransferase family. Mg(2+) is required as a cofactor.

It localises to the cell inner membrane. It carries out the reaction all-trans-octaprenyl diphosphate + 4-hydroxybenzoate = 4-hydroxy-3-(all-trans-octaprenyl)benzoate + diphosphate. It functions in the pathway cofactor biosynthesis; ubiquinone biosynthesis. Catalyzes the prenylation of para-hydroxybenzoate (PHB) with an all-trans polyprenyl group. Mediates the second step in the final reaction sequence of ubiquinone-8 (UQ-8) biosynthesis, which is the condensation of the polyisoprenoid side chain with PHB, generating the first membrane-bound Q intermediate 3-octaprenyl-4-hydroxybenzoate. This Serratia proteamaculans (strain 568) protein is 4-hydroxybenzoate octaprenyltransferase.